We begin with the raw amino-acid sequence, 514 residues long: Histidine ammonia-lyase (514 aa).

Positions 147 to 149 form a cross-link, 5-imidazolinone (Ala-Gly); that stretch reads ASG. At Ser148 the chain carries 2,3-didehydroalanine (Ser).

It belongs to the PAL/histidase family. Contains an active site 4-methylidene-imidazol-5-one (MIO), which is formed autocatalytically by cyclization and dehydration of residues Ala-Ser-Gly.

It localises to the cytoplasm. The catalysed reaction is L-histidine = trans-urocanate + NH4(+). It functions in the pathway amino-acid degradation; L-histidine degradation into L-glutamate; N-formimidoyl-L-glutamate from L-histidine: step 1/3. The chain is Histidine ammonia-lyase from Gloeobacter violaceus (strain ATCC 29082 / PCC 7421).